An 84-amino-acid polypeptide reads, in one-letter code: Small ribosomal subunit protein uS17 (84 aa).

Belongs to the universal ribosomal protein uS17 family. As to quaternary structure, part of the 30S ribosomal subunit.

Its function is as follows. One of the primary rRNA binding proteins, it binds specifically to the 5'-end of 16S ribosomal RNA. The sequence is that of Small ribosomal subunit protein uS17 from Nitrosomonas europaea (strain ATCC 19718 / CIP 103999 / KCTC 2705 / NBRC 14298).